Reading from the N-terminus, the 314-residue chain is GDP-L-fucose synthase (314 aa).

NADP(+) contacts are provided by residues 15 to 21 and 109 to 112; these read GHKGMVG and LGSS. Tyr140 (proton donor/acceptor) is an active-site residue. NADP(+) is bound by residues Lys144, 167-170, and His183; that span reads PTNL. Positions 191, 206, 213, and 273 each coordinate substrate.

The protein belongs to the NAD(P)-dependent epimerase/dehydratase family. Fucose synthase subfamily.

It carries out the reaction GDP-beta-L-fucose + NADP(+) = GDP-4-dehydro-alpha-D-rhamnose + NADPH + H(+). It functions in the pathway nucleotide-sugar biosynthesis; GDP-L-fucose biosynthesis via de novo pathway; GDP-L-fucose from GDP-alpha-D-mannose: step 2/2. Catalyzes the two-step NADP-dependent conversion of GDP-4-dehydro-6-deoxy-D-mannose to GDP-fucose, involving an epimerase and a reductase reaction. This chain is GDP-L-fucose synthase, found in Sinorhizobium fredii (strain NBRC 101917 / NGR234).